The following is a 183-amino-acid chain: Putative NAD(P)H nitroreductase YdjA (183 aa).

Residues 10 to 12 (RRS), Arg35, and His39 contribute to the FMN site. 121–126 (AAVAQG) is a binding site for NAD(+). 131–133 (WRS) lines the FMN pocket.

It belongs to the nitroreductase family. Homodimer. FMN serves as cofactor.

The chain is Putative NAD(P)H nitroreductase YdjA (ydjA) from Escherichia coli O157:H7.